The following is a 415-amino-acid chain: Peptide chain release factor subunit 1-1 (415 aa).

It belongs to the eukaryotic release factor 1 family. Heterodimer of two subunits, one of which binds GTP.

It is found in the cytoplasm. Functionally, directs the termination of nascent peptide synthesis (translation) in response to the termination codons UAA, UAG and UGA. The sequence is that of Peptide chain release factor subunit 1-1 from Methanosarcina acetivorans (strain ATCC 35395 / DSM 2834 / JCM 12185 / C2A).